A 514-amino-acid chain; its full sequence is Peptide chain release factor 3 (514 aa).

The tr-type G domain maps to 8–268 (KKRRTFAIIS…IFLKFAPEPH (261 aa)). GTP-binding positions include 17 to 24 (SHPDAGKT), 85 to 89 (DTPGH), and 139 to 142 (NKLD).

Belongs to the TRAFAC class translation factor GTPase superfamily. Classic translation factor GTPase family. PrfC subfamily.

The protein localises to the cytoplasm. In terms of biological role, increases the formation of ribosomal termination complexes and stimulates activities of RF-1 and RF-2. It binds guanine nucleotides and has strong preference for UGA stop codons. It may interact directly with the ribosome. The stimulation of RF-1 and RF-2 is significantly reduced by GTP and GDP, but not by GMP. The protein is Peptide chain release factor 3 of Streptococcus pneumoniae (strain 70585).